A 131-amino-acid chain; its full sequence is Ribosome-binding factor A (131 aa).

The protein belongs to the RbfA family. Monomer. Binds 30S ribosomal subunits, but not 50S ribosomal subunits or 70S ribosomes.

Its subcellular location is the cytoplasm. In terms of biological role, one of several proteins that assist in the late maturation steps of the functional core of the 30S ribosomal subunit. Associates with free 30S ribosomal subunits (but not with 30S subunits that are part of 70S ribosomes or polysomes). Required for efficient processing of 16S rRNA. May interact with the 5'-terminal helix region of 16S rRNA. This chain is Ribosome-binding factor A, found in Protochlamydia amoebophila (strain UWE25).